A 204-amino-acid chain; its full sequence is Peptide deformylase (204 aa).

Residues C131 and H174 each coordinate Fe cation. E175 is an active-site residue. H178 serves as a coordination point for Fe cation.

Belongs to the polypeptide deformylase family. It depends on Fe(2+) as a cofactor.

It catalyses the reaction N-terminal N-formyl-L-methionyl-[peptide] + H2O = N-terminal L-methionyl-[peptide] + formate. Removes the formyl group from the N-terminal Met of newly synthesized proteins. Requires at least a dipeptide for an efficient rate of reaction. N-terminal L-methionine is a prerequisite for activity but the enzyme has broad specificity at other positions. This chain is Peptide deformylase, found in Streptococcus pyogenes serotype M1.